A 647-amino-acid polypeptide reads, in one-letter code: Acetyl-coenzyme A synthetase (647 aa).

CoA-binding positions include 189-192 (RGGK), threonine 307, and asparagine 331. ATP contacts are provided by residues 383 to 385 (GEP), 407 to 412 (DTWWQT), aspartate 496, and arginine 511. Serine 519 serves as a coordination point for CoA. Residue arginine 522 coordinates ATP. Mg(2+) is bound by residues histidine 535 and valine 538. Residue arginine 580 participates in CoA binding. At lysine 605 the chain carries N6-acetyllysine.

This sequence belongs to the ATP-dependent AMP-binding enzyme family. It depends on Mg(2+) as a cofactor. Acetylated. Deacetylation by the SIR2-homolog deacetylase activates the enzyme.

It carries out the reaction acetate + ATP + CoA = acetyl-CoA + AMP + diphosphate. Its function is as follows. Catalyzes the conversion of acetate into acetyl-CoA (AcCoA), an essential intermediate at the junction of anabolic and catabolic pathways. AcsA undergoes a two-step reaction. In the first half reaction, AcsA combines acetate with ATP to form acetyl-adenylate (AcAMP) intermediate. In the second half reaction, it can then transfer the acetyl group from AcAMP to the sulfhydryl group of CoA, forming the product AcCoA. The chain is Acetyl-coenzyme A synthetase from Syntrophus aciditrophicus (strain SB).